The primary structure comprises 133 residues: Ribosomal RNA large subunit methyltransferase H 1 (133 aa).

Residues I55, G89, and 101–106 (ISPMEM) contribute to the S-adenosyl-L-methionine site.

It belongs to the RNA methyltransferase RlmH family. Homodimer.

Its subcellular location is the cytoplasm. It catalyses the reaction pseudouridine(1915) in 23S rRNA + S-adenosyl-L-methionine = N(3)-methylpseudouridine(1915) in 23S rRNA + S-adenosyl-L-homocysteine + H(+). Its function is as follows. Specifically methylates the pseudouridine at position 1915 (m3Psi1915) in 23S rRNA. The sequence is that of Ribosomal RNA large subunit methyltransferase H 1 from Thermoanaerobacter sp. (strain X514).